The chain runs to 862 residues: Transcription initiation factor TFIID subunit 4B (862 aa).

The sufficient for interaction with ZNF628 stretch occupies residues 100–241 (NTTTIQFPAN…TPSNEPNLKA (142 aa)). The segment covering 219 to 237 (VTTLKPSSLGASSTPSNEP) has biased composition (polar residues). The disordered stretch occupies residues 219-239 (VTTLKPSSLGASSTPSNEPNL). The TAFH domain occupies 256-353 (LENVKKCKNF…CVQQTSSDMV (98 aa)). The interval 511 to 533 (PGPVLSQPAGIPQAVQVKQLVVQ) is required for interaction with P65/RELA. The Nuclear export signal motif lies at 516 to 556 (SQPAGIPQAVQVKQLVVQQPSGGNEKQVTTISHSSTLTIQK). Ser-595 is modified (phosphoserine). Positions 653–702 (PFLFIGALQKRILDIGKKHDITELNSDAVNLISQATQERLRGLLEKLTAI) constitute a Histone-fold domain. Residues 722 to 787 (TRSQLKFLEK…LAQIQHRDAN (66 aa)) adopt a coiled-coil conformation. Positions 830-862 (PRITRICLRDLIFCMEQEREMKYSRALYLALLK) are required for interaction with TAF12.

It belongs to the TAF4 family. In terms of assembly, TFIID is composed of TATA binding protein (TBP) and a number of TBP-associated factors (TAFs). Heterodimerizes with TAF12/TFII20 via the C-terminal H2A-like histone-fold domain. This heterodimer forms a histone-like octamer with the TAF6/TAFII70-TAF9/TAFII31 heterodimer. Interacts with P65/RELA homodimers and P65/RELA-REL heterodimers. Interaction with POU2AF1, via its C-terminal activation domain, is required for octamer-dependent transcription. Interacts with ZNF628. Post-translationally, under stimulation by forskolin, Isoform 1 is phosphorylated by protein kinase A (PKA). In terms of tissue distribution, preferentially expressed in ovarian granulosa cells (at protein level). Highly expressed in B-cells.

Its subcellular location is the nucleus. It localises to the cytoplasm. Functionally, cell type-specific subunit of the general transcription factor TFIID that may function as a gene-selective coactivator in certain cells. TFIID is a multimeric protein complex that plays a central role in mediating promoter responses to various activators and repressors. TAF4B is a transcriptional coactivator of the p65/RELA NF-kappa-B subunit. Involved in the activation of a subset of antiapoptotic genes including TNFAIP3. May be involved in regulating folliculogenesis. Through interaction with OCBA/POU2AF1, acts as a coactivator of B-cell-specific transcription. Plays a role in spermiogenesis and oogenesis. The chain is Transcription initiation factor TFIID subunit 4B (TAF4B) from Homo sapiens (Human).